Here is a 420-residue protein sequence, read N- to C-terminus: ATP-dependent Clp protease ATP-binding subunit ClpX (420 aa).

A ClpX-type ZB domain is found at 3-57 (KKTPGTNGKQKLFCSFCGKEQDAVKRLVAGPGVYICDECISLCNEIIAEDHEHSH). Zn(2+) contacts are provided by cysteine 16, cysteine 19, cysteine 38, and cysteine 41. 122-129 (PTGSGKTL) serves as a coordination point for ATP.

The protein belongs to the ClpX chaperone family. In terms of assembly, component of the ClpX-ClpP complex. Forms a hexameric ring that, in the presence of ATP, binds to fourteen ClpP subunits assembled into a disk-like structure with a central cavity, resembling the structure of eukaryotic proteasomes.

ATP-dependent specificity component of the Clp protease. It directs the protease to specific substrates. Can perform chaperone functions in the absence of ClpP. This is ATP-dependent Clp protease ATP-binding subunit ClpX from Leptospira borgpetersenii serovar Hardjo-bovis (strain L550).